The following is a 300-amino-acid chain: Homoserine kinase (300 aa).

86–96 (PVARGLGSSAT) is a binding site for ATP.

It belongs to the GHMP kinase family. Homoserine kinase subfamily.

It is found in the cytoplasm. The catalysed reaction is L-homoserine + ATP = O-phospho-L-homoserine + ADP + H(+). Its pathway is amino-acid biosynthesis; L-threonine biosynthesis; L-threonine from L-aspartate: step 4/5. Its function is as follows. Catalyzes the ATP-dependent phosphorylation of L-homoserine to L-homoserine phosphate. This chain is Homoserine kinase, found in Persephonella marina (strain DSM 14350 / EX-H1).